The primary structure comprises 374 residues: Large ribosomal subunit protein bL27m (374 aa).

The transit peptide at 1-41 (MLRLSGVKSAVRARAAAGAAFSVSLSGPQAVSLLALPLVRH) directs the protein to the mitochondrion.

The protein belongs to the bacterial ribosomal protein bL27 family.

It localises to the mitochondrion. Functionally, component of the large subunit of mitochondrial ribosome. The polypeptide is Large ribosomal subunit protein bL27m (MRPL2) (Yarrowia lipolytica (strain CLIB 122 / E 150) (Yeast)).